The chain runs to 34 residues: Kappa-theraphotoxin-Sc1a (34 aa).

Disulfide bonds link cysteine 2–cysteine 16, cysteine 9–cysteine 21, and cysteine 15–cysteine 28. Isoleucine 34 bears the Isoleucine amide mark.

The protein belongs to the neurotoxin 10 (Hwtx-1) family. 57 (ScTx1) subfamily. Expressed by the venom gland.

Its subcellular location is the secreted. Its function is as follows. Acts as a gating-modifier to inhibit voltage-gated potassium channels. It inhibits delayed Kv2.1/KCNB1 (IC(50) is 12.7 nM), Kv2.1/Kv9.3 (IC(50) is 7.2 nM) (KCNB1/KCNS3), Kv2.2/KCNB2 (IC(50) is 21.4 nM), and transient Kv4.2/KCND2 (IC(50) is 1.2 nM) channels. The sequence is that of Kappa-theraphotoxin-Sc1a from Stromatopelma calceatum (Featherleg baboon tarantula).